Consider the following 1012-residue polypeptide: DNA polymerase catalytic subunit (1012 aa).

It belongs to the DNA polymerase type-B family.

The protein resides in the host nucleus. The catalysed reaction is DNA(n) + a 2'-deoxyribonucleoside 5'-triphosphate = DNA(n+1) + diphosphate. In Homo sapiens (Human), this protein is DNA polymerase catalytic subunit (U38).